The chain runs to 323 residues: Elongation factor P--(R)-beta-lysine ligase (323 aa).

Substrate is bound at residue 76-78 (SPE). Residues 100–102 (RNE) and asparagine 109 each bind ATP. Position 118 (tyrosine 118) interacts with substrate. 242 to 243 (EL) serves as a coordination point for ATP. Glutamate 249 is a binding site for substrate. ATP is bound at residue glycine 298.

Belongs to the class-II aminoacyl-tRNA synthetase family. EpmA subfamily. Homodimer.

The catalysed reaction is D-beta-lysine + L-lysyl-[protein] + ATP = N(6)-((3R)-3,6-diaminohexanoyl)-L-lysyl-[protein] + AMP + diphosphate + H(+). In terms of biological role, with EpmB is involved in the beta-lysylation step of the post-translational modification of translation elongation factor P (EF-P). Catalyzes the ATP-dependent activation of (R)-beta-lysine produced by EpmB, forming a lysyl-adenylate, from which the beta-lysyl moiety is then transferred to the epsilon-amino group of a conserved specific lysine residue in EF-P. The protein is Elongation factor P--(R)-beta-lysine ligase of Mannheimia succiniciproducens (strain KCTC 0769BP / MBEL55E).